A 346-amino-acid polypeptide reads, in one-letter code: tRNA N6-adenosine threonylcarbamoyltransferase (346 aa).

The Fe cation site is built by histidine 111 and histidine 115. Substrate-binding positions include 134-138, aspartate 167, glycine 180, and asparagine 279; that span reads LVSGG. Fe cation is bound at residue aspartate 307.

The protein belongs to the KAE1 / TsaD family. It depends on Fe(2+) as a cofactor.

It localises to the cytoplasm. It carries out the reaction L-threonylcarbamoyladenylate + adenosine(37) in tRNA = N(6)-L-threonylcarbamoyladenosine(37) in tRNA + AMP + H(+). Its function is as follows. Required for the formation of a threonylcarbamoyl group on adenosine at position 37 (t(6)A37) in tRNAs that read codons beginning with adenine. Is involved in the transfer of the threonylcarbamoyl moiety of threonylcarbamoyl-AMP (TC-AMP) to the N6 group of A37, together with TsaE and TsaB. TsaD likely plays a direct catalytic role in this reaction. The protein is tRNA N6-adenosine threonylcarbamoyltransferase of Burkholderia multivorans (strain ATCC 17616 / 249).